The chain runs to 342 residues: tRNA N6-adenosine threonylcarbamoyltransferase (342 aa).

Fe cation-binding residues include H115 and H119. Substrate-binding positions include 137-141 (IVSGG), D170, G183, D187, and N276. D304 lines the Fe cation pocket.

Belongs to the KAE1 / TsaD family. It depends on Fe(2+) as a cofactor.

The protein localises to the cytoplasm. It carries out the reaction L-threonylcarbamoyladenylate + adenosine(37) in tRNA = N(6)-L-threonylcarbamoyladenosine(37) in tRNA + AMP + H(+). Functionally, required for the formation of a threonylcarbamoyl group on adenosine at position 37 (t(6)A37) in tRNAs that read codons beginning with adenine. Is involved in the transfer of the threonylcarbamoyl moiety of threonylcarbamoyl-AMP (TC-AMP) to the N6 group of A37, together with TsaE and TsaB. TsaD likely plays a direct catalytic role in this reaction. This chain is tRNA N6-adenosine threonylcarbamoyltransferase, found in Staphylococcus haemolyticus (strain JCSC1435).